Here is a 332-residue protein sequence, read N- to C-terminus: Holliday junction branch migration complex subunit RuvB (332 aa).

Positions 1-181 (MSRILDNEQM…FGITGHMEYY (181 aa)) are large ATPase domain (RuvB-L). ATP-binding positions include Leu-20, Arg-21, Gly-62, Lys-65, Thr-66, Thr-67, 128-130 (EDF), Arg-171, Tyr-181, and Arg-218. Thr-66 lines the Mg(2+) pocket. A small ATPAse domain (RuvB-S) region spans residues 182-252 (EEADLTEIVE…ITDQALSMLD (71 aa)). Residues 255 to 332 (HEGLDYVDQK…EHLGYEYMEK (78 aa)) are head domain (RuvB-H). Positions 291, 310, 312, and 315 each coordinate DNA.

This sequence belongs to the RuvB family. Homohexamer. Forms an RuvA(8)-RuvB(12)-Holliday junction (HJ) complex. HJ DNA is sandwiched between 2 RuvA tetramers; dsDNA enters through RuvA and exits via RuvB. An RuvB hexamer assembles on each DNA strand where it exits the tetramer. Each RuvB hexamer is contacted by two RuvA subunits (via domain III) on 2 adjacent RuvB subunits; this complex drives branch migration. In the full resolvosome a probable DNA-RuvA(4)-RuvB(12)-RuvC(2) complex forms which resolves the HJ.

The protein localises to the cytoplasm. It catalyses the reaction ATP + H2O = ADP + phosphate + H(+). Functionally, the RuvA-RuvB-RuvC complex processes Holliday junction (HJ) DNA during genetic recombination and DNA repair, while the RuvA-RuvB complex plays an important role in the rescue of blocked DNA replication forks via replication fork reversal (RFR). RuvA specifically binds to HJ cruciform DNA, conferring on it an open structure. The RuvB hexamer acts as an ATP-dependent pump, pulling dsDNA into and through the RuvAB complex. RuvB forms 2 homohexamers on either side of HJ DNA bound by 1 or 2 RuvA tetramers; 4 subunits per hexamer contact DNA at a time. Coordinated motions by a converter formed by DNA-disengaged RuvB subunits stimulates ATP hydrolysis and nucleotide exchange. Immobilization of the converter enables RuvB to convert the ATP-contained energy into a lever motion, pulling 2 nucleotides of DNA out of the RuvA tetramer per ATP hydrolyzed, thus driving DNA branch migration. The RuvB motors rotate together with the DNA substrate, which together with the progressing nucleotide cycle form the mechanistic basis for DNA recombination by continuous HJ branch migration. Branch migration allows RuvC to scan DNA until it finds its consensus sequence, where it cleaves and resolves cruciform DNA. This Streptococcus gordonii (strain Challis / ATCC 35105 / BCRC 15272 / CH1 / DL1 / V288) protein is Holliday junction branch migration complex subunit RuvB.